A 76-amino-acid chain; its full sequence is Protein OPG146 (76 aa).

Belongs to the orthopoxvirus OPG146 family. Interacts with capping enzyme RAP94/OPG109, the two large RNA polymerase subunits RPO147/OPG105 and RPO132/OPG151, the two early transcription factor subunits OPG185 and OPG133, one of the capping enzyme subunits OPG113, the nucleoside triphosphate phosphohydrolase OPG123, two core proteins OPG129 and OPG138, and a virion protein OPG064.

It localises to the virion. The protein resides in the host cytoplasm. It is found in the host nucleus. Functionally, plays a role in the maturation of immature virions to infectious particles. May also participate in viral transcription. This is Protein OPG146 (OPG146) from Variola virus (isolate Human/India/Ind3/1967) (VARV).